Consider the following 437-residue polypeptide: Glutamate-1-semialdehyde 2,1-aminomutase (437 aa).

Lysine 274 is modified (N6-(pyridoxal phosphate)lysine).

This sequence belongs to the class-III pyridoxal-phosphate-dependent aminotransferase family. HemL subfamily. Homodimer. It depends on pyridoxal 5'-phosphate as a cofactor.

It is found in the cytoplasm. The catalysed reaction is (S)-4-amino-5-oxopentanoate = 5-aminolevulinate. Its pathway is porphyrin-containing compound metabolism; protoporphyrin-IX biosynthesis; 5-aminolevulinate from L-glutamyl-tRNA(Glu): step 2/2. The polypeptide is Glutamate-1-semialdehyde 2,1-aminomutase (Verminephrobacter eiseniae (strain EF01-2)).